Here is a 546-residue protein sequence, read N- to C-terminus: CTP synthase (546 aa).

Residues methionine 1–isoleucine 266 are amidoligase domain. Serine 14 provides a ligand contact to CTP. Serine 14 is a UTP binding site. ATP contacts are provided by residues serine 15–isoleucine 20 and aspartate 72. Residues aspartate 72 and glutamate 140 each coordinate Mg(2+). Residues aspartate 147–glutamate 149, lysine 187–glutamine 192, and lysine 223 each bind CTP. Residues lysine 187–glutamine 192 and lysine 223 each bind UTP. An ATP-binding site is contributed by lysine 239–valine 241. The 252-residue stretch at threonine 291–glycine 542 folds into the Glutamine amidotransferase type-1 domain. Residue glycine 352 coordinates L-glutamine. Residue cysteine 379 is the Nucleophile; for glutamine hydrolysis of the active site. Residues leucine 380–glutamine 383, glutamate 403, and arginine 470 each bind L-glutamine. Active-site residues include histidine 515 and glutamate 517.

It belongs to the CTP synthase family. Homotetramer.

It catalyses the reaction UTP + L-glutamine + ATP + H2O = CTP + L-glutamate + ADP + phosphate + 2 H(+). It carries out the reaction L-glutamine + H2O = L-glutamate + NH4(+). The catalysed reaction is UTP + NH4(+) + ATP = CTP + ADP + phosphate + 2 H(+). Its pathway is pyrimidine metabolism; CTP biosynthesis via de novo pathway; CTP from UDP: step 2/2. With respect to regulation, allosterically activated by GTP, when glutamine is the substrate; GTP has no effect on the reaction when ammonia is the substrate. The allosteric effector GTP functions by stabilizing the protein conformation that binds the tetrahedral intermediate(s) formed during glutamine hydrolysis. Inhibited by the product CTP, via allosteric rather than competitive inhibition. Its function is as follows. Catalyzes the ATP-dependent amination of UTP to CTP with either L-glutamine or ammonia as the source of nitrogen. Regulates intracellular CTP levels through interactions with the four ribonucleotide triphosphates. This is CTP synthase from Aliivibrio salmonicida (strain LFI1238) (Vibrio salmonicida (strain LFI1238)).